The sequence spans 149 residues: Nascent polypeptide-associated complex subunit beta-2 (149 aa).

Positions 38–103 constitute an NAC-A/B domain; sequence DKDNTKLQAE…PKENTLNGLY (66 aa).

Belongs to the NAC-beta family. In terms of assembly, part of the nascent polypeptide-associated complex (NAC), consisting of EGD2 and either EGD1 or BTT1. NAC associates with ribosomes via EGD1 or BTT1.

It is found in the cytoplasm. The protein localises to the nucleus. Functionally, acts as a component of the nascent polypeptide-associated complex (NAC), which promotes mitochondrial protein import by enhancing productive ribosome interactions with the outer mitochondrial membrane. Also blocks the inappropriate interaction of ribosomes translating non-secretory nascent polypeptides with translocation sites in the membrane of the endoplasmic reticulum. BTT1 may act as a transcription factor that exert a negative effect on the expression of several genes that are transcribed by RNA polymerase II. This is Nascent polypeptide-associated complex subunit beta-2 (BTT1) from Saccharomyces cerevisiae (strain YJM789) (Baker's yeast).